The sequence spans 145 residues: Polytheonamide B (145 aa).

The propeptide occupies Met-1–Gly-96. Position 97 is a 2-oxo-5,5-dimethylhexanoate (Thr-97). Ile-99 is subject to 3-methylisoleucine. A 3-methylvaline modification is found at Val-101. Val-102 carries the post-translational modification 3-methyl-D-valine. Val-103 carries the 3-methylvaline modification. At Ala-104 the chain carries D-alanine (Ala). Val-105 carries the post-translational modification 3-methylvaline. 3-methyl-D-valine is present on residues Val-106 and Val-110. Asn-112 carries the N4-methyl-D-asparagine modification. Thr-113 is modified (3-hydroxyvaline (Thr)). Val-117 is modified (3-methylvaline). An N4-methyl-D-asparagine modification is found at Asn-118. Gln-119 is subject to (3S)-3-methylglutamine. Val-120 carries the post-translational modification 3-hydroxy-D-valine. Asn-124 is subject to N4-methyl-D-asparagine. (3R)-N4-methyl-3-hydroxy-D-asparagine is present on Asn-126. The residue at position 127 (Val-127) is a 3-methylvaline. Residue Val-128 is modified to 3-hydroxy-D-valine. An N4-methyl-D-asparagine mark is found at Asn-130 and Asn-132. Asn-134 bears the (3R)-N4-methyl-3-hydroxy-D-asparagine mark. Position 136 is an N4-methyl-D-asparagine (Asn-136). Ser-138 is subject to D-serine (Ser). Residue Asn-140 is modified to D-asparagine. Met-141 is subject to 3,3-dimethylmethionine. Residue Asn-142 is modified to D-asparagine. Thr-144 bears the D-threonine mark.

In terms of processing, epimerization of most, and perhaps all, L- to D-amino acids is catalyzed by PoyD, when PoyA and PoyD are coexpressed in E.coli. N-methylations are catalyzed by PoyE, when PoyA and PoyE are coexpressed in E.coli. Post-translationally, to obtain 2-oxo-5,5-dimethylhexanoate, Thr-97 is firstly dehydrated by PoyF. The second step possibly corresponds to methylation by PoyB/C, and the third step may be a cleavage by PoyH/J.

Antimicrobial peptide active against Gram-positive bacteria (MIC=4-&gt;125 ug/ml). May act by forming transmembrane ion channels, since the peptide rapidly depolarizes the bacterial cytoplasmic membrane, simultaneously decreasing the membrane potential and intracellular potassium contents. The protein is Polytheonamide B of Bacterium symbiont subsp. Theonella swinhoei (strain pTSMAC1).